We begin with the raw amino-acid sequence, 348 residues long: Rhodopsin (348 aa).

Met-1 is subject to N-acetylmethionine. Topologically, residues 1–36 (MNGTEGPNFYVPFSNATGVVRSPFEYPQYYLAEPWQ) are extracellular. N-linked (GlcNAc...) asparagine glycosylation is found at Asn-2 and Asn-15. A helical membrane pass occupies residues 37 to 61 (FSMLAAYMFLLIVLGFPINFLTLYV). Topologically, residues 62–73 (TVQHKKLRTPLN) are cytoplasmic. Residues 74 to 96 (YILLNLAVADLFMVFGGFTTTLY) traverse the membrane as a helical segment. At 97–110 (TSLHGYFVFGPTGC) the chain is on the extracellular side. An intrachain disulfide couples Cys-110 to Cys-187. Residues 111-133 (NAEGFFATLGGEIALWSLVVLAI) traverse the membrane as a helical segment. Residues 134-136 (ERY) carry the 'Ionic lock' involved in activated form stabilization motif. The Cytoplasmic segment spans residues 134 to 152 (ERYVVVCKPMSNFRFGENH). Residues 153–173 (AIMGVAFTWVMALACAAPPLF) form a helical membrane-spanning segment. The Extracellular segment spans residues 174-202 (GWSRYIPEGLQCSCGIDYYTLKPEVNNES). Residue Glu-201 participates in Zn(2+) binding. The chain crosses the membrane as a helical span at residues 203–224 (FVIYMFVVHFTIPMIVIFFCYG). Residues 225-252 (QLVFTVKEARAQQQESATTQKAEKEVTR) lie on the Cytoplasmic side of the membrane. Residues 253-274 (MVIIMVIAFLICWVPYASVAFY) form a helical membrane-spanning segment. Residues 275 to 286 (IFTHQGSNFGPI) are Extracellular-facing. Gln-279 lines the Zn(2+) pocket. A helical transmembrane segment spans residues 287 to 308 (FMTIPAFFAKSASIYNPVIYIM). The residue at position 296 (Lys-296) is an N6-(retinylidene)lysine. The Cytoplasmic portion of the chain corresponds to 309–348 (MNKQFRNCMLTTICCGKNPLGDDEASATVSKTETSQVAPA). 2 S-palmitoyl cysteine lipidation sites follow: Cys-322 and Cys-323. The interaction with SAG stretch occupies residues 330–348 (DDEASATVSKTETSQVAPA). At Ser-334 the chain carries Phosphoserine. Thr-336 is modified (phosphothreonine). Ser-338 carries the phosphoserine modification. 2 positions are modified to phosphothreonine: Thr-340 and Thr-342. Ser-343 is subject to Phosphoserine.

Belongs to the G-protein coupled receptor 1 family. Opsin subfamily. As to quaternary structure, homodimer. May form a complex composed of RHO, GRK1 and RCVRN in a Ca(2+)-dependent manner; RCVRN prevents the interaction between GRK1 and RHO. Interacts with GRK1. Interacts (phosphorylated form) with SAG. Interacts with GNAT1. Interacts with GNAT3. SAG and G-proteins compete for a common binding site. Interacts with PRCD; the interaction promotes PRCD stability. Forms a complex with ASAP1 and ARF4. Forms a complex with ASAP1, RAB11A, Rabin8/RAB3IP, ARF4 and RAB11FIP3; the complex regulates Golgi-to-cilia rhodopsin/RHO transport in photoreceptors. Post-translationally, phosphorylated on some or all of the serine and threonine residues present in the C-terminal region. Contains one covalently linked retinal chromophore. Upon light absorption, the covalently bound 11-cis-retinal is converted to all-trans-retinal. After hydrolysis of the Schiff base and release of the covalently bound all-trans-retinal, active rhodopsin is regenerated by binding of a fresh molecule of 11-cis-retinal.

It is found in the membrane. The protein localises to the cell projection. The protein resides in the cilium. Its subcellular location is the photoreceptor outer segment. Photoreceptor required for image-forming vision at low light intensity. Required for photoreceptor cell viability after birth. Light-induced isomerization of 11-cis to all-trans retinal triggers a conformational change that activates signaling via G-proteins. Subsequent receptor phosphorylation mediates displacement of the bound G-protein alpha subunit by the arrestin SAG and terminates signaling. The sequence is that of Rhodopsin (RHO) from Macaca fascicularis (Crab-eating macaque).